The chain runs to 391 residues: uncharacterized protein (391 aa).

The next 11 membrane-spanning stretches (helical) occupy residues 15-35 (LSFC…LPIL), 48-68 (FLIG…QIPF), 81-101 (IIFG…TNSI), 139-159 (IIGV…PIIA), 167-187 (IFWI…FLIP), 217-237 (FYLG…IIPY), 251-271 (IVYF…VFYF), 275-295 (FFLK…LLLF), 303-323 (ICLT…EIFF), 346-366 (TSQF…CTFF), and 369-389 (NHIF…SFFC).

Belongs to the major facilitator superfamily.

Its subcellular location is the cell membrane. This is an uncharacterized protein from Buchnera aphidicola subsp. Schizaphis graminum (strain Sg).